Here is a 981-residue protein sequence, read N- to C-terminus: Ephrin type-A receptor 3 (981 aa).

Positions 1 to 20 (MALFRIYSFLAPFHILVLCQ) are cleaved as a signal peptide. Residues 21–545 (ALRNYPDNEV…LAVGDPNQQT (525 aa)) are Extracellular-facing. The Eph LBD domain occupies 29–210 (EVTLLDSMSA…FYKRCPLAVL (182 aa)). Fibronectin type-III domains are found at residues 328–441 (PPSA…TSQT) and 442–533 (VSVI…TSHE). N-linked (GlcNAc...) asparagine glycans are attached at residues Asn-340, Asn-410, Asn-435, and Asn-485. Residues 546-566 (ILAISVAGGAVLLVLLVACFI) form a helical membrane-spanning segment. Topologically, residues 567–981 (VSGRRCGYIK…QAHHGTQVQV (415 aa)) are cytoplasmic. Tyr-601 and Tyr-607 each carry phosphotyrosine; by autocatalysis. The Protein kinase domain maps to 626-887 (IRIERVIGAG…QIVNTLDRLI (262 aa)). ATP is bound by residues 633-638 (GAGEFG), Lys-658, and 705-711 (EYMENGS). The residue at position 706 (Tyr-706) is a Phosphotyrosine; by autocatalysis. The active-site Proton acceptor is Asp-751. Position 755–756 (755–756 (RN)) interacts with ATP. Tyr-784 and Tyr-927 each carry phosphotyrosine; by autocatalysis. An SAM domain is found at 910–974 (AAVNTVEDWL…LSSIQCLQAH (65 aa)). The PDZ-binding motif lies at 979–981 (VQV).

The protein belongs to the protein kinase superfamily. Tyr protein kinase family. Ephrin receptor subfamily. In terms of assembly, heterotetramer upon binding of the ligand. The heterotetramer is composed of an ephrin dimer and a receptor dimer. Oligomerization is probably required to induce biological responses. Autophosphorylates upon activation by efna5. In terms of tissue distribution, widely expressed in the developing zebrafish nervous system.

It localises to the cell membrane. It catalyses the reaction L-tyrosyl-[protein] + ATP = O-phospho-L-tyrosyl-[protein] + ADP + H(+). Its function is as follows. Receptor tyrosine kinase which binds promiscuously membrane-bound ephrin family ligands residing on adjacent cells, leading to contact-dependent bidirectional signaling into neighboring cells. The signaling pathway downstream of the receptor is referred to as forward signaling while the signaling pathway downstream of the ephrin ligand is referred to as reverse signaling. Highly promiscuous for ephrin-A ligands it binds preferentially efna5. Upon activation by efna5 regulates cell-cell adhesion, cytoskeletal organization and cell migration. Plays a role in cardiac cells migration and differentiation probably through activation by efna1. Involved in the retinotectal mapping of neurons. May also control the segregation but not the guidance of motor and sensory axons during neuromuscular circuit development. This is Ephrin type-A receptor 3 (epha3) from Danio rerio (Zebrafish).